We begin with the raw amino-acid sequence, 48 residues long: Gas vesicle protein A (48 aa).

The protein belongs to the gas vesicle GvpA family. In terms of assembly, the gas vesicle shell is 2 nm thick and consists of a single layer of this protein. It forms helical ribs nearly perpendicular to the long axis of the vesicle.

Its subcellular location is the gas vesicle shell. Its function is as follows. Gas vesicles are hollow, gas filled proteinaceous nanostructures found in some microorganisms. During planktonic growth they allow positioning of the organism at a favorable depth for light or nutrient acquisition. GvpA forms the protein shell. This is Gas vesicle protein A from Spirulina sp. (strain CCAP 1475/10).